A 449-amino-acid polypeptide reads, in one-letter code: MSHDSSPQPLTAAPGAPLRGRLRPPGDKSISHRSMILGLLSQGETRVEGLLEGDDVLRTAAAAKALGAGVERLGPGRWRVQGVGIGGLGDPADVLDFGNAGTGSRLMMGVVGGQPVTATFDGDASLRSRPMRRILDPLTRMGTQVLSEAEGGRVPLTLRGPREAIPITYETPAASAQIKSAVLLAGLNAPGVTTVIEAAATRDHTERMLRLFGAAVSVEPHGPGGHGRKVALTGQPTLRGTDVVVPADPSSAAFPLVAALIVPGSDVVIEGVMMNPLRIGLITTLLEMGAQIERVAEREEGGETVADLRVRASRLNGVDVPAERAPAMIDEYPVLAVAASFAEGRTRMSGLHELRVKESDRLAAVAAGLAANGVRHTVEGDDLVVEGDGAAAPGGGTVETHLDHRIAMAFLVMGLAARNPVTVDDGAMIATSFPSFLPTMQALGGRIGA.

Positions 1 to 30 are disordered; the sequence is MSHDSSPQPLTAAPGAPLRGRLRPPGDKSI. Residues Lys28, Ser29, and Arg33 each contribute to the 3-phosphoshikimate site. Lys28 is a binding site for phosphoenolpyruvate. Residues Gly101 and Arg129 each contribute to the phosphoenolpyruvate site. 3-phosphoshikimate-binding residues include Ser175, Gln177, Asp330, and Lys357. Phosphoenolpyruvate is bound at residue Gln177. The active-site Proton acceptor is Asp330. Phosphoenolpyruvate-binding residues include Arg361 and Arg405.

It belongs to the EPSP synthase family. As to quaternary structure, monomer.

It localises to the cytoplasm. The enzyme catalyses 3-phosphoshikimate + phosphoenolpyruvate = 5-O-(1-carboxyvinyl)-3-phosphoshikimate + phosphate. It functions in the pathway metabolic intermediate biosynthesis; chorismate biosynthesis; chorismate from D-erythrose 4-phosphate and phosphoenolpyruvate: step 6/7. Functionally, catalyzes the transfer of the enolpyruvyl moiety of phosphoenolpyruvate (PEP) to the 5-hydroxyl of shikimate-3-phosphate (S3P) to produce enolpyruvyl shikimate-3-phosphate and inorganic phosphate. The polypeptide is 3-phosphoshikimate 1-carboxyvinyltransferase (Methylobacterium radiotolerans (strain ATCC 27329 / DSM 1819 / JCM 2831 / NBRC 15690 / NCIMB 10815 / 0-1)).